A 252-amino-acid chain; its full sequence is tRNA (guanine-N(1)-)-methyltransferase (252 aa).

Residues Gly-117 and 137 to 142 (IGDYVL) contribute to the S-adenosyl-L-methionine site.

It belongs to the RNA methyltransferase TrmD family. As to quaternary structure, homodimer.

Its subcellular location is the cytoplasm. The enzyme catalyses guanosine(37) in tRNA + S-adenosyl-L-methionine = N(1)-methylguanosine(37) in tRNA + S-adenosyl-L-homocysteine + H(+). Its function is as follows. Specifically methylates guanosine-37 in various tRNAs. The chain is tRNA (guanine-N(1)-)-methyltransferase from Idiomarina loihiensis (strain ATCC BAA-735 / DSM 15497 / L2-TR).